A 120-amino-acid chain; its full sequence is Large ribosomal subunit protein bL12 (120 aa).

It belongs to the bacterial ribosomal protein bL12 family. Homodimer. Part of the ribosomal stalk of the 50S ribosomal subunit. Forms a multimeric L10(L12)X complex, where L10 forms an elongated spine to which 2 to 4 L12 dimers bind in a sequential fashion. Binds GTP-bound translation factors.

In terms of biological role, forms part of the ribosomal stalk which helps the ribosome interact with GTP-bound translation factors. Is thus essential for accurate translation. This is Large ribosomal subunit protein bL12 from Brevibacillus brevis (strain 47 / JCM 6285 / NBRC 100599).